The following is a 333-amino-acid chain: L-lactate dehydrogenase B chain (333 aa).

NAD(+) is bound by residues 29–57 (GQVGMACAVSILGKGLCDELALVDVLEDK) and arginine 99. Substrate contacts are provided by arginine 106, asparagine 138, and arginine 169. Asparagine 138 contacts NAD(+). Catalysis depends on histidine 193, which acts as the Proton acceptor. A substrate-binding site is contributed by threonine 248.

The protein belongs to the LDH/MDH superfamily. LDH family. As to quaternary structure, homotetramer.

It is found in the cytoplasm. The enzyme catalyses (S)-lactate + NAD(+) = pyruvate + NADH + H(+). It functions in the pathway fermentation; pyruvate fermentation to lactate; (S)-lactate from pyruvate: step 1/1. In terms of biological role, interconverts simultaneously and stereospecifically pyruvate and lactate with concomitant interconversion of NADH and NAD(+). This chain is L-lactate dehydrogenase B chain (LDHB), found in Anas platyrhynchos (Mallard).